Reading from the N-terminus, the 356-residue chain is sn-glycerol-3-phosphate import ATP-binding protein UgpC (356 aa).

The ABC transporter domain occupies 4–235 (LKLQAVTKSW…PASLFVASFI (232 aa)). 37–44 (GPSGCGKS) contacts ATP.

The protein belongs to the ABC transporter superfamily. sn-glycerol-3-phosphate importer (TC 3.A.1.1.3) family. In terms of assembly, the complex is composed of two ATP-binding proteins (UgpC), two transmembrane proteins (UgpA and UgpE) and a solute-binding protein (UgpB).

It is found in the cell inner membrane. It catalyses the reaction sn-glycerol 3-phosphate(out) + ATP + H2O = sn-glycerol 3-phosphate(in) + ADP + phosphate + H(+). Functionally, part of the ABC transporter complex UgpBAEC involved in sn-glycerol-3-phosphate (G3P) import. Responsible for energy coupling to the transport system. The protein is sn-glycerol-3-phosphate import ATP-binding protein UgpC of Shigella boydii serotype 4 (strain Sb227).